The sequence spans 370 residues: Flagellar P-ring protein (370 aa).

Positions 1 to 28 are cleaved as a signal peptide; sequence MTFFTRCFRRGALLFLLAVLLLPSPAQA.

It belongs to the FlgI family. The basal body constitutes a major portion of the flagellar organelle and consists of four rings (L,P,S, and M) mounted on a central rod.

The protein resides in the periplasm. The protein localises to the bacterial flagellum basal body. In terms of biological role, assembles around the rod to form the L-ring and probably protects the motor/basal body from shearing forces during rotation. In Oleidesulfovibrio alaskensis (strain ATCC BAA-1058 / DSM 17464 / G20) (Desulfovibrio alaskensis), this protein is Flagellar P-ring protein.